The chain runs to 190 residues: Potassium-transporting ATPase KdpC subunit (190 aa).

Residues 15-35 traverse the membrane as a helical segment; the sequence is LWILTALIYPAIVLVIGQLVF.

It belongs to the KdpC family. The system is composed of three essential subunits: KdpA, KdpB and KdpC.

Its subcellular location is the cell inner membrane. In terms of biological role, part of the high-affinity ATP-driven potassium transport (or Kdp) system, which catalyzes the hydrolysis of ATP coupled with the electrogenic transport of potassium into the cytoplasm. This subunit acts as a catalytic chaperone that increases the ATP-binding affinity of the ATP-hydrolyzing subunit KdpB by the formation of a transient KdpB/KdpC/ATP ternary complex. The polypeptide is Potassium-transporting ATPase KdpC subunit (Synechocystis sp. (strain ATCC 27184 / PCC 6803 / Kazusa)).